Reading from the N-terminus, the 319-residue chain is Dehydrogenase/reductase SDR family member 9 (319 aa).

An N-terminal signal peptide occupies residues 1–17 (MLFWVLGLLILCGFLWT). NAD(+) contacts are provided by residues 34-58 (ITGC…HVIA) and aspartate 83. Serine 164 lines the substrate pocket. Residue tyrosine 176 is the Proton acceptor of the active site. Lysine 180 contributes to the NAD(+) binding site.

The protein belongs to the short-chain dehydrogenases/reductases (SDR) family. Homotetramer. Highly expressed in trachea and epidermis. Detected at lower levels in spinal cord, bone marrow, brain, tongue, esophagus, heart, colon, testis, placenta, lung, skeletal muscle and lymph node.

Its subcellular location is the microsome membrane. The protein resides in the endoplasmic reticulum membrane. It catalyses the reaction 3beta-hydroxy-5alpha-pregnane-20-one + NAD(+) = 5alpha-pregnane-3,20-dione + NADH + H(+). The enzyme catalyses 17beta-hydroxy-5alpha-androstan-3-one + NAD(+) = 5alpha-androstan-3,17-dione + NADH + H(+). It carries out the reaction androsterone + NAD(+) = 5alpha-androstan-3,17-dione + NADH + H(+). The catalysed reaction is 5alpha-androstane-3alpha,17beta-diol + NAD(+) = 17beta-hydroxy-5alpha-androstan-3-one + NADH + H(+). It catalyses the reaction all-trans-retinol + NAD(+) = all-trans-retinal + NADH + H(+). The enzyme catalyses 3alpha-hydroxy-5alpha-pregnan-20-one + NAD(+) = 5alpha-pregnane-3,20-dione + NADH + H(+). In terms of biological role, 3-alpha-hydroxysteroid dehydrogenase that converts 3-alpha-tetrahydroprogesterone (allopregnanolone) to dihydroxyprogesterone and 3-alpha-androstanediol to dihydroxyprogesterone. Also plays a role in the biosynthesis of retinoic acid from retinaldehyde. Can utilize both NADH and NADPH. This Homo sapiens (Human) protein is Dehydrogenase/reductase SDR family member 9 (DHRS9).